The chain runs to 196 residues: dTTP/UTP pyrophosphatase (196 aa).

Asp-75 (proton acceptor) is an active-site residue.

It belongs to the Maf family. YhdE subfamily. A divalent metal cation serves as cofactor.

Its subcellular location is the cytoplasm. It catalyses the reaction dTTP + H2O = dTMP + diphosphate + H(+). The catalysed reaction is UTP + H2O = UMP + diphosphate + H(+). Nucleoside triphosphate pyrophosphatase that hydrolyzes dTTP and UTP. May have a dual role in cell division arrest and in preventing the incorporation of modified nucleotides into cellular nucleic acids. The polypeptide is dTTP/UTP pyrophosphatase (Wolbachia pipientis subsp. Culex pipiens (strain wPip)).